A 251-amino-acid polypeptide reads, in one-letter code: uncharacterized protein (251 aa).

Residues Thr3–Lys58 form the HTH deoR-type domain. Positions Val20 to Asp39 form a DNA-binding region, H-T-H motif.

This is an uncharacterized protein from Bacillus subtilis (strain 168).